Consider the following 349-residue polypeptide: D-alanine--D-alanine ligase (349 aa).

An ATP-grasp domain is found at 132-335 (KHVFEAVGVP…YSDLIEKLVD (204 aa)). 162–217 (VEKLDFPVFVKPANMGSSVGISKVDDLADLQPALSEAYKYDNRVVIEQGVDAREIE) contributes to the ATP binding site. The Mg(2+) site is built by Asp-289, Glu-302, and Asn-304.

It belongs to the D-alanine--D-alanine ligase family. The cofactor is Mg(2+). Mn(2+) serves as cofactor.

It localises to the cytoplasm. The catalysed reaction is 2 D-alanine + ATP = D-alanyl-D-alanine + ADP + phosphate + H(+). Its pathway is cell wall biogenesis; peptidoglycan biosynthesis. Cell wall formation. This is D-alanine--D-alanine ligase from Lactococcus lactis subsp. cremoris (strain MG1363).